The chain runs to 536 residues: Methyl-accepting chemotaxis aspartate transducer (536 aa).

Residues 1-10 (MFNRIRISTS) are Cytoplasmic-facing. Residues 11–31 (LFLLLISFCIMQLISTGLSYV) traverse the membrane as a helical segment. Residues 32–188 (ALRADNHNLE…ASSQQAYGWS (157 aa)) are Periplasmic-facing. Residues 64–73 (RNTLNRAGTR) are the 3 Arg may form a positively charged pocket, which binds the alpha-carboxyl group of the attractant AA. The helical transmembrane segment at 189–209 (IWLVAGAVLMLLVVTLSAMWW) threads the bilayer. At 210–536 (LRTMLVQPLN…VKETLDCQTA (327 aa)) the chain is on the cytoplasmic side. In terms of domain architecture, HAMP spans 212-264 (TMLVQPLNIIRGHFERIASGDLSAPIEVYGRNEISQLFASLQRMQQSLIGTVG). Residues 269–498 (GAESILIGLQ…ESASAAAALE (230 aa)) enclose the Methyl-accepting transducer domain. Gln-293 carries the post-translational modification Glutamate methyl ester (Gln). A Glutamate methyl ester (Glu) modification is found at Glu-300. The residue at position 307 (Gln-307) is a Glutamate methyl ester (Gln). Glutamate methyl ester (Glu) is present on residues Glu-489 and Glu-498.

The protein belongs to the methyl-accepting chemotaxis (MCP) protein family.

The protein localises to the cell inner membrane. Functionally, this protein responds to changes in Asp concentration in the environment, transduces a signal from the outside to the inside of the cell, and facilitates sensory adaptation through various levels of methylation. Its function is as follows. Chemotactic-signal transducers respond to changes in the concentration of attractants and repellents in the environment, transduce a signal from the outside to the inside of the cell, and facilitate sensory adaptation through the variation of the level of methylation. Attractants increase the level of methylation while repellents decrease the level of methylation, the methyl groups are added by the methyltransferase CheR and removed by the methylesterase CheB. The protein is Methyl-accepting chemotaxis aspartate transducer (tas) of Klebsiella aerogenes (strain ATCC 13048 / DSM 30053 / CCUG 1429 / JCM 1235 / KCTC 2190 / NBRC 13534 / NCIMB 10102 / NCTC 10006 / CDC 819-56) (Enterobacter aerogenes).